A 418-amino-acid polypeptide reads, in one-letter code: CinA-like protein (418 aa).

Belongs to the CinA family.

The sequence is that of CinA-like protein from Leptospira interrogans serogroup Icterohaemorrhagiae serovar copenhageni (strain Fiocruz L1-130).